The sequence spans 388 residues: Galactokinase (388 aa).

33–36 (EHTD) lines the substrate pocket. ATP contacts are provided by residues serine 67 and 124–130 (GSGLSSS). 2 residues coordinate Mg(2+): serine 130 and glutamate 162. The active-site Proton acceptor is the aspartate 174. Tyrosine 224 provides a ligand contact to substrate.

This sequence belongs to the GHMP kinase family. GalK subfamily.

It is found in the cytoplasm. It carries out the reaction alpha-D-galactose + ATP = alpha-D-galactose 1-phosphate + ADP + H(+). Its pathway is carbohydrate metabolism; galactose metabolism. Catalyzes the transfer of the gamma-phosphate of ATP to D-galactose to form alpha-D-galactose-1-phosphate (Gal-1-P). This is Galactokinase from Streptococcus thermophilus.